The chain runs to 283 residues: Small ribosomal subunit protein uS2B (283 aa).

A disordered region spans residues glycine 254 to alanine 283. The segment covering tryptophan 267–alanine 283 has biased composition (polar residues).

It belongs to the universal ribosomal protein uS2 family. As to quaternary structure, component of the small ribosomal subunit. Mature ribosomes consist of a small (40S) and a large (60S) subunit. The 40S subunit contains about 33 different proteins and 1 molecule of RNA (18S). The 60S subunit contains about 49 different proteins and 3 molecules of RNA (25S, 5.8S and 5S). Interacts with rps21.

It is found in the cytoplasm. Functionally, required for the assembly and/or stability of the 40S ribosomal subunit. Required for the processing of the 20S rRNA-precursor to mature 18S rRNA in a late step of the maturation of 40S ribosomal subunits. The chain is Small ribosomal subunit protein uS2B (rps0b) from Schizosaccharomyces japonicus (strain yFS275 / FY16936) (Fission yeast).